The following is a 501-amino-acid chain: Probable malate:quinone oxidoreductase (501 aa).

This sequence belongs to the MQO family. FAD is required as a cofactor.

It carries out the reaction (S)-malate + a quinone = a quinol + oxaloacetate. The protein operates within carbohydrate metabolism; tricarboxylic acid cycle; oxaloacetate from (S)-malate (quinone route): step 1/1. The sequence is that of Probable malate:quinone oxidoreductase from Geobacillus kaustophilus (strain HTA426).